We begin with the raw amino-acid sequence, 948 residues long: ATPase 2, plasma membrane-type (948 aa).

S2 bears the N-acetylserine mark. Topologically, residues 2 to 61 (SSLEDIKNETVDLEKIPIEEVFQQLKCSREGLTTQEGEDRIQIFGPNKLEEKKESKLLKF) are cytoplasmic. A helical membrane pass occupies residues 62–81 (LGFMWNPLSWVMEMAAIMAI). The Extracellular segment spans residues 82–93 (ALANGDGRPPDW). A helical membrane pass occupies residues 94 to 114 (QDFVGIICLLVINSTISFIEE). Residues 115–243 (NNAGNAAAAL…GHFQKVLTAI (129 aa)) are Cytoplasmic-facing. Residues 244-264 (GNFCICSIAIGMVIEIIVMYP) traverse the membrane as a helical segment. Residues 265 to 273 (IQRRKYRDG) are Extracellular-facing. A helical membrane pass occupies residues 274–291 (IDNLLVLLIGGIPIAMPT). Residues 292-643 (VLSVTMAIGS…TSRAIFQRMK (352 aa)) are Cytoplasmic-facing. Catalysis depends on D329, which acts as the 4-aspartylphosphate intermediate. The Mg(2+) site is built by D588 and D592. The helical transmembrane segment at 644 to 665 (NYTIYAVSITIRIVFGFMLIAL) threads the bilayer. The Extracellular portion of the chain corresponds to 666–670 (IWEFD). The helical transmembrane segment at 671 to 693 (FSAFMVLIIAILNDGTIMTISKD) threads the bilayer. At 694–709 (RVKPSPTPDSWKLKEI) the chain is on the cytoplasmic side. Residues 710 to 730 (FATGVVLGGYQAIMTVIFFWA) form a helical membrane-spanning segment. Residues 731–751 (AHKTDFFSDTFGVRSIRDNNH) lie on the Extracellular side of the membrane. Residues 752-772 (ELMGAVYLQVSIISQALIFVT) traverse the membrane as a helical segment. The Cytoplasmic portion of the chain corresponds to 773 to 784 (RSRSWSFVERPG). Residues 785-805 (ALLMIAFLIAQLIATLIAVYA) form a helical membrane-spanning segment. Over 806-813 (NWEFAKIR) the chain is Extracellular. A helical transmembrane segment spans residues 814 to 834 (GIGWGWAGVIWLYSIVTYFPL). The Cytoplasmic portion of the chain corresponds to 835–948 (DVFKFAIRYI…DIETPSHYTV (114 aa)). A Phosphothreonine modification is found at T881. Position 899 is a phosphoserine (S899). S931 is subject to Phosphoserine; by CIPK11. Positions 946 to 948 (YTV) are interaction with 14-3-3 proteins. T947 is subject to Phosphothreonine.

It belongs to the cation transport ATPase (P-type) (TC 3.A.3) family. Type IIIA subfamily. In terms of assembly, binds to 14-3-3 proteins. The binding is induced by phosphorylation of Thr-947 and it activates the H(+)-ATPase. Interacts (via the R-domain) with PSY1R (via C-terminus). Part of a functional complex containing PSKR1, BAK1, CNGC17, and AHA. Interacts with CNGC17 and PSKR1. Interacts with PP2C67/PP2C-D1 at the plasma membrane. Interacts with AHA1. Phosphorylated, probably by PHOT1 and PHOT2, at C-terminal Thr-947 in guard cells in response to blue light to induce stomatal opening. In terms of processing, phosphorylation at Thr-881 by PSY1R. This phosphorylation activates proton pumping. Decreased phosphorylation in response to flg22 elicitation. Post-translationally, phosphorylation at Ser-899 is specifically induced by RALF1, thus leading to the inhibition of proton transport. Increased phosphorylation in response to flg22 elicitation. Phosphorylation of Thr-947 induces the binding to 14-3-3 proteins, but phosphorylation of Ser-931 interferes with this binding no matter whether Thr-947 is phosphorylated or not. Decreased phosphorylation in response to flg22 elicitation. Phosphorylation of Thr-947 is enhanced by the presence of brassinolide (BL) via the BRI1-BIN2 pathway and prior the trigger of hypocotyl elongation. Inactivated by PP2C67/PP2C-D1-mediated Thr-947 dephosphorylation; SAUR19 inhibits the action of PP2C67/PP2C-D1 and thus promotes the active phosphorylated form. In terms of processing, abscisic acid induces dephosphorylation of AHA2 in etiolated seedlings, suppressing ATP hydrolysis and hypocotyl elongation. Higher levels in roots than in shoots. Expressed in epidermal and root cortex cells, in phloem, xylem and root hairs. Detected in cotyledons, leaves, hypocotyls, roots and root hairs. Expressed in guard cells and mesophyll cells.

The protein resides in the cell membrane. The enzyme catalyses ATP + H2O + H(+)(in) = ADP + phosphate + 2 H(+)(out). Its activity is regulated as follows. Regulated by an auto-inhibitory C-terminal domain that can be displaced by phosphorylation of Thr-947 and the subsequent binding of 14-3-3 proteins. Negatively regulated by PKS5. PKS5 phosphorylates Ser-931, inhibiting interaction with the activating 14-3-3 protein. Positively regulated by PSY1R. PSY1R phosphorylates Thr-881, situated in the auto-inhibitory region I of the C-terminal domain, causing pump activation. Negatively regulated by the secreted peptide RALF. After specific binding to FERONIA, RALF causes phosphorylation at Ser-899, mediating the inhibition of proton transport. Activated by lysophospholipids, without the involvement of phosphorylation of Thr-947. This activation is critically dependent on the single autoinhibitory residue Leu-919. Repressed by PP2C-D phosphatases (e.g. PP2C67/PP2C-D1 and PP2C64/PP2C-D5) which dephosphorylates Thr-947. Triggered by SAUR19 via phosphorylation of the C-terminal autoinhibitory domain (e.g. Thr-947), as a result of the inhibition of PP2C67/PP2C-D1. Phosphorylation on Thr residues is repressed by tyrphostin 9, sphingosine, GW5074 and BML-265. By contrast, the fungal phytotoxin fusicoccin (FC) promotes phosphorylation of Thr-947 independently to BHP, thus leading to large stomatal opening. In terms of biological role, the plasma membrane H(+) ATPase of plants and fungi generates a proton gradient that drives the active transport of nutrients by H(+)-symport. The resulting external acidification and/or internal alkinization may mediate growth responses. Involved in maintaining the membrane potential and delta-pH, together forming the plasma membrane protonmotive force (PMF) required for root and hypocotyl elongation and root tropism. Important for root growth and development during different nitrogen regimes. Forms a functional cation-translocating unit with CNGC17 that is activated by PSKR1/BAK1 and possibly other BAK1/RLK complexes. Promotes stomatal opening in response to blue light. This is ATPase 2, plasma membrane-type from Arabidopsis thaliana (Mouse-ear cress).